Here is a 62-residue protein sequence, read N- to C-terminus: Ponericin-W-like 32.2 (62 aa).

A signal peptide spans 1-23 (MKCKKQLLVIFFAYFLVVNESEA). A propeptide spanning residues 49–62 (RALMKRDLEDIMDP) is cleaved from the precursor.

It belongs to the non-disulfide-bridged peptide (NDBP) superfamily. Medium-length antimicrobial peptide (group 3) family. Ponericin-W subfamily. As to expression, expressed by the venom gland.

It localises to the secreted. It is found in the target cell membrane. Its function is as follows. Antimicrobial peptide with potent activity against a range of Gram-positive and Gram-negative bacteria. Has high hemolytic activity against erythrocytes. May act by disrupting the integrity of the bacterial cell membrane. The chain is Ponericin-W-like 32.2 from Lychas mucronatus (Chinese swimming scorpion).